The sequence spans 204 residues: Inositol diphosphatase DSP2 (204 aa).

A disordered region spans residues 1-27 (MQLEISPRQRSQQQKEEEGEHQQRAGE). The span at 13-27 (QQKEEEGEHQQRAGE) shows a compositional bias: basic and acidic residues. Residues 51–203 (NFAEVNDGIF…SSLMHLTASQ (153 aa)) form the Tyrosine-protein phosphatase domain. Residues 107–119 (FGIDGSKELLVNI) form a WPD loop important for active site topology region. N118, I119, and K123 together coordinate 1D-myo-inositol hexakisphosphate. Residue C143 is the Phosphocysteine intermediate of the active site.

Belongs to the protein-tyrosine phosphatase family. Atypical dual-specificity phosphatase Siw14-like subfamily. Expressed in roots and young panicles.

The protein localises to the cytoplasm. Its subcellular location is the nucleus. It carries out the reaction 5-diphospho-1D-myo-inositol 1,2,3,4,6-pentakisphosphate + H2O = 1D-myo-inositol hexakisphosphate + phosphate + H(+). The enzyme catalyses 1,5-bis(diphospho)-1D-myo-inositol 2,3,4,6-tetrakisphosphate + H2O = 1-diphospho-1D-myo-inositol 2,3,4,5,6-pentakisphosphate + phosphate + 2 H(+). It catalyses the reaction 3,5-bis(diphospho)-1D-myo-inositol 1,2,4,6-tetrakisphosphate + H2O = 3-diphospho-1D-myo-inositol 1,2,4,5,6-pentakisphosphate + phosphate + 2 H(+). The catalysed reaction is 6-diphospho-1D-myo-inositol pentakisphosphate + H2O = 1D-myo-inositol hexakisphosphate + phosphate + H(+). Its function is as follows. Cleaves the beta-phosphate at the 5-position of soluble inositol pyrophosphates. Has highest activity on 5-diphosphoinositol 1,2,3,4,6-pentakisphosphate (5-InsP(7)). Acts as a negative regulator of defense responses against the fungal pathogen Magnaporthe oryzae. The polypeptide is Inositol diphosphatase DSP2 (Oryza sativa subsp. japonica (Rice)).